A 21-amino-acid chain; its full sequence is Hemocyanin subunit 4 (21 aa).

It belongs to the tyrosinase family. Hemocyanin subfamily. As to expression, hemolymph.

It localises to the secreted. Its subcellular location is the extracellular space. In terms of biological role, hemocyanins are copper-containing oxygen carriers occurring freely dissolved in the hemolymph of many mollusks and arthropods. The sequence is that of Hemocyanin subunit 4 from Maja squinado (Mediterranean spider crab).